The primary structure comprises 338 residues: Ketol-acid reductoisomerase (NADP(+)) (338 aa).

The KARI N-terminal Rossmann domain maps to 1–181 (MKVFYDKDCD…GGGRTGIIET (181 aa)). Residues 24–27 (YGSQ), R47, S50, T52, and 82–85 (DEFQ) each bind NADP(+). Residue H107 is part of the active site. G133 serves as a coordination point for NADP(+). In terms of domain architecture, KARI C-terminal knotted spans 182 to 327 (TFKDETETDL…EQLRSMMPWI (146 aa)). Mg(2+) is bound by residues D190, E194, E226, and E230. Position 251 (S251) interacts with substrate.

It belongs to the ketol-acid reductoisomerase family. The cofactor is Mg(2+).

It catalyses the reaction (2R)-2,3-dihydroxy-3-methylbutanoate + NADP(+) = (2S)-2-acetolactate + NADPH + H(+). The catalysed reaction is (2R,3R)-2,3-dihydroxy-3-methylpentanoate + NADP(+) = (S)-2-ethyl-2-hydroxy-3-oxobutanoate + NADPH + H(+). Its pathway is amino-acid biosynthesis; L-isoleucine biosynthesis; L-isoleucine from 2-oxobutanoate: step 2/4. It participates in amino-acid biosynthesis; L-valine biosynthesis; L-valine from pyruvate: step 2/4. Involved in the biosynthesis of branched-chain amino acids (BCAA). Catalyzes an alkyl-migration followed by a ketol-acid reduction of (S)-2-acetolactate (S2AL) to yield (R)-2,3-dihydroxy-isovalerate. In the isomerase reaction, S2AL is rearranged via a Mg-dependent methyl migration to produce 3-hydroxy-3-methyl-2-ketobutyrate (HMKB). In the reductase reaction, this 2-ketoacid undergoes a metal-dependent reduction by NADPH to yield (R)-2,3-dihydroxy-isovalerate. The chain is Ketol-acid reductoisomerase (NADP(+)) from Pseudomonas fluorescens (strain ATCC BAA-477 / NRRL B-23932 / Pf-5).